We begin with the raw amino-acid sequence, 102 residues long: Large ribosomal subunit protein bL21 (102 aa).

The protein belongs to the bacterial ribosomal protein bL21 family. Part of the 50S ribosomal subunit. Contacts protein L20.

Functionally, this protein binds to 23S rRNA in the presence of protein L20. This Azorhizobium caulinodans (strain ATCC 43989 / DSM 5975 / JCM 20966 / LMG 6465 / NBRC 14845 / NCIMB 13405 / ORS 571) protein is Large ribosomal subunit protein bL21.